The primary structure comprises 882 residues: Ion channel DMI1 (882 aa).

A disordered region spans residues 1-122 (MAKSNEESSN…PSSSSITKQQ (122 aa)). Residues 48–62 (TSTTKTDFSEQQWNY) are compositionally biased toward polar residues. Positions 78-95 (PPPPPSKPPVNLIPPHPR) are enriched in pro residues. Residues 107–117 (SSLLPQPSSSS) show a composition bias toward low complexity. A run of 4 helical transmembrane segments spans residues 129–149 (SPIFYLLVICCIILVPYSAYL), 192–212 (TIALYIVLFTLILPFVLYKYL), 255–275 (LALLCATLFLIAFGGLALYAV), and 307–327 (IVSVSISAGGMLIFAMMLGLV). RCK N-terminal domains are found at residues 348-489 (RNHV…ETVV) and 608-757 (PEKI…DKSI). Residues 378–403 (VIVVLAEKEKEEMEMDIAKLEFDFMG) are a coiled coil.

It belongs to the castor/pollux (TC 1.A.1.23) family. In terms of assembly, interacts (via c-terminus) with CNGC15A, CNGC15B and CNGC15C (via N-terminus). The Nod factor has no effect on these interactions, implying that the complex is maintained after activation. As to expression, mainly expressed in roots and nodules. Also detected in pods, flowers, leaves, and stems.

It localises to the nucleus membrane. Its function is as follows. Required for early signal transduction events leading to endosymbiosis. Acts early in a signal transduction chain leading from the perception of Nod factor to the activation of calcium spiking. Also involved in mycorrhizal symbiosis. May be involved in the regulation of the calcium channel responsible for calcium spiking by mobilizing another cation, and thereby altering the membrane potential. The polypeptide is Ion channel DMI1 (Medicago truncatula (Barrel medic)).